The following is a 313-amino-acid chain: Probable inactive peptidyl-prolyl cis-trans isomerase-like 6 (313 aa).

The 164-residue stretch at 147-310 (YLDICIDLSP…LLCSIADSGV (164 aa)) folds into the PPIase cyclophilin-type domain.

This sequence belongs to the cyclophilin-type PPIase family.

Probable inactive PPIase with no peptidyl-prolyl cis-trans isomerase activity. This is Probable inactive peptidyl-prolyl cis-trans isomerase-like 6 from Mus musculus (Mouse).